Here is a 457-residue protein sequence, read N- to C-terminus: UDP-glycosyltransferase 708C2 (457 aa).

The Proton acceptor role is filled by His-32. His-32 is an an anthocyanidin binding site. The active-site Charge relay is the Asp-129. Thr-150 serves as a coordination point for UDP-alpha-D-glucose. Positions 279–280 (NR) are UDP. UDP-alpha-D-glucose contacts are provided by Val-341, Gln-343, His-358, Trp-361, Asn-362, Ser-363, and Glu-366. Gly-381 is an an anthocyanidin binding site. Residues Asp-382 and Gln-383 each coordinate UDP-alpha-D-glucose.

It belongs to the UDP-glycosyltransferase family. In terms of tissue distribution, expressed in cotyledons. Not detected in flowers, leaves, roots and hypocotyls.

The catalysed reaction is a 3'-hydro-2'-hydroxy-beta-oxodihydrochalcone + UDP-alpha-D-glucose = a 3'-(beta-D-glucopyranosyl)-2'-hydroxy-beta-oxodihydrochalcone + UDP + H(+). Functionally, UDP-glucose-dependent glucosyltransferase catalyzing the c-glucosylation of 2-hydroxyflavanones (2-hydroxynaringenin, 2-hydroxyeriodictyol and 2-hydroxypinocembrin) and phloretin. No activity with flavanones, flavones or flavonols. This is UDP-glycosyltransferase 708C2 from Fagopyrum esculentum (Common buckwheat).